Reading from the N-terminus, the 726-residue chain is Transmembrane channel-like protein 8 (726 aa).

Topologically, residues 1 to 114 (MLLPRSVSSE…GIRSYFTFLR (114 aa)) are cytoplasmic. Position 6 is a phosphoserine (Ser-6). The chain crosses the membrane as a helical span at residues 115 to 135 (FLLLLNLLSLLLTASFVLLPL). Residues 136-200 (VWLRPPDPGP…VGPESSSVYS (65 aa)) lie on the Lumenal side of the membrane. An N-linked (GlcNAc...) asparagine glycan is attached at Asn-148. Residues 201 to 221 (IRLAYLLSPLACLLLCFCGTL) traverse the membrane as a helical segment. Over 222–299 (RRMVKGLPQK…AQTACRLLSY (78 aa)) the chain is Cytoplasmic. Residues 300–320 (LRVNVLNGLLVVGAISAIFWA) traverse the membrane as a helical segment. The Lumenal portion of the chain corresponds to 321–338 (TKYSQDNKEESLFLLLQY). The chain crosses the membrane as a helical span at residues 339 to 359 (LPPGVIALVNFLGPLLFTFLV). Topologically, residues 360-426 (QLENYPPNTE…QCWENSVGEE (67 aa)) are cytoplasmic. The segment at 362 to 530 (ENYPPNTEVN…SSRPFRASSS (169 aa)) is TMC domain. A helical transmembrane segment spans residues 427–447 (LYKLSIFNFLLTVAFAFLVTL). Residues 448-488 (PRRLLVDRFSGRFWAWLEREEFLVPKNVLDIVAGQTVTWMG) lie on the Lumenal side of the membrane. A helical transmembrane segment spans residues 489-509 (LFYCPLLPLLNSVFLFLTFYI). Over 510 to 531 (KKYTLLKNSRASSRPFRASSST) the chain is Cytoplasmic. The helical transmembrane segment at 532 to 552 (FFFQLVLLLGLLLAAVPLGYV) threads the bilayer. Over 553–594 (VSSIHSSWDCGLFTNYSAPWQVVPELVALGLPPIGQRALHYL) the chain is Lumenal. Asn-567 carries N-linked (GlcNAc...) asparagine glycosylation. A helical membrane pass occupies residues 595–615 (GSHAFSFPLLIMLSLVLTVCV). Over 616-726 (SQTQANARAI…RFRFPSGAEL (111 aa)) the chain is Cytoplasmic. The interval 651–726 (PEPGPSDSPG…RFRFPSGAEL (76 aa)) is disordered. Over residues 652 to 662 (EPGPSDSPGPK) the composition is skewed to pro residues. Phosphoserine is present on residues Ser-658 and Ser-673.

It belongs to the TMC family. In terms of assembly, interacts with TMC6. Interacts and forms a complex with TMC6 and CIB1; the interaction stabilizes each component of the complex. Interacts and forms a complex with TMC6 and SLC30A1/ZNT1; the interaction regulates zinc transport into the ER. Interacts with TRADD; the interaction competes with TRADD/RIPK1/TRAF2/cIAPs complex I formation and facilites complex II formation. As to quaternary structure, (Microbial infection) Interacts with human papillomavirus 16/HPV16 protein E5; the interaction alleviates TMC8-mediated transcription factors inhibition. Expressed in placenta, prostate and testis.

It is found in the endoplasmic reticulum membrane. The protein localises to the golgi apparatus membrane. Its subcellular location is the nucleus membrane. Its function is as follows. Acts as a regulatory protein involved in the regulation of numerous cellular processes. Together with its homolog TMC6/EVER1, forms a complex with calcium-binding protein CIB1 in lymphocytes and keratynocytes where TMC6 and TMC8 stabilize CIB1 levels and reciprocally. Together with TMC6, also forms a complex with and activates zinc transporter ZNT1 at the ER membrane of keratynocytes, thereby facilitating zinc uptake into the ER. Also inhibits receptor-mediated calcium release from ER stores and calcium activated and volume regulated chloride channels. Down-regulates the activity of transcription factors induced by zinc and cytokines. Also sequesters TRADD which impairs the recruitment of TRAF2 and RIPK1 in the pro-survival complex I and promotes proapoptotic complex II formation, and may therefore be involved in TNF-induced cell death/survival decisions. The chain is Transmembrane channel-like protein 8 from Homo sapiens (Human).